Consider the following 545-residue polypeptide: O-phosphoserine--tRNA(Cys) ligase (545 aa).

Substrate is bound by residues 189–191 (HMT), 234–236 (SAS), 276–277 (YY), and Asn328.

This sequence belongs to the class-II aminoacyl-tRNA synthetase family. O-phosphoseryl-tRNA(Cys) synthetase subfamily. Homotetramer. Interacts with SepCysS.

It catalyses the reaction tRNA(Cys) + O-phospho-L-serine + ATP = O-phospho-L-seryl-tRNA(Cys) + AMP + diphosphate. Catalyzes the attachment of O-phosphoserine (Sep) to tRNA(Cys). This chain is O-phosphoserine--tRNA(Cys) ligase, found in Methanothrix thermoacetophila (strain DSM 6194 / JCM 14653 / NBRC 101360 / PT) (Methanosaeta thermophila).